Reading from the N-terminus, the 378-residue chain is Probable endopolygalacturonase AFUB_016610 (378 aa).

The N-terminal stretch at 1–19 (MLKLMGSLVLLASAAEVIA) is a signal peptide. The propeptide occupies 20–35 (SPAAEPVAPSTTLEKR). C38 and C56 are oxidised to a cystine. PbH1 repeat units follow at residues 147–169 (TSSSSITDLHILNTPVQAVSING), 170–200 (CDGLTITDITIDNSAGDTQGGHNTDAFDIGS), and 201–222 (SSNIIISGAKVYNQDDCVAVNS). D215 functions as the Proton donor in the catalytic mechanism. The cysteines at positions 217 and 233 are disulfide-linked. H237 is a catalytic residue. 2 PbH1 repeats span residues 252–273 (VENVSFTNSQVTNSDNGLRIKA) and 281–303 (IKGVTYSGITLSSIRKYGILIEQ). Residue N254 is glycosylated (N-linked (GlcNAc...) asparagine). A glycan (N-linked (GlcNAc...) asparagine) is linked at N327. An intrachain disulfide couples C345 to C350. N352 carries N-linked (GlcNAc...) asparagine glycosylation. C369 and C378 are joined by a disulfide.

This sequence belongs to the glycosyl hydrolase 28 family.

It localises to the secreted. The enzyme catalyses (1,4-alpha-D-galacturonosyl)n+m + H2O = (1,4-alpha-D-galacturonosyl)n + (1,4-alpha-D-galacturonosyl)m.. Involved in maceration and soft-rotting of plant tissue. Hydrolyzes the 1,4-alpha glycosidic bonds of de-esterified pectate in the smooth region of the plant cell wall. The protein is Probable endopolygalacturonase AFUB_016610 of Aspergillus fumigatus (strain CBS 144.89 / FGSC A1163 / CEA10) (Neosartorya fumigata).